A 293-amino-acid polypeptide reads, in one-letter code: Elongation factor Ts (293 aa).

The tract at residues 80 to 83 (TDFV) is involved in Mg(2+) ion dislocation from EF-Tu.

This sequence belongs to the EF-Ts family.

It localises to the cytoplasm. In terms of biological role, associates with the EF-Tu.GDP complex and induces the exchange of GDP to GTP. It remains bound to the aminoacyl-tRNA.EF-Tu.GTP complex up to the GTP hydrolysis stage on the ribosome. In Burkholderia vietnamiensis (strain G4 / LMG 22486) (Burkholderia cepacia (strain R1808)), this protein is Elongation factor Ts.